We begin with the raw amino-acid sequence, 592 residues long: MAENNNNNNNNNNNNVSTPPHQKPHLTTGLRTSSSGLLMDKRRQDEEKFSAEQVAMGKKSPTKLFSAYSLNDLSNPPTDEELNNYKDLPASSLPPIHKREKLRRVFVNRDIKLDRIEFFGFDMDYTLAVYNSPDFEELAYDMVLDKLIDIGYPKSIRKLKYDPNFPTRGLFLDRELGNLLKIDSFGNIIICVHGRTTLSKNRTAEFYPSMRVSSDEIARNRFYLLNTLFTLPEACLYADLVDHLERESGLRLTEEVADEQQQMNSPPLSSLGSESVRIDESNHQPEGDLSFSNLFQDVRTACDLVHNDGSLKTRVLDDLPRYIRKTPDMPVFFDRLRQNKNKVFLLTNSEFYYTNKVMSYMMNGYNPNYQSWRDYFDVIIVGADKPRFFSEGTTIREVDTETGNLRITNVKDRFEQGKVYHGGSLSLFQKLTGAKGSRVLYIGDHIFADIIKSKKTHGWRNLLVVPELQHELEVMNQQKDTTIHLMNLEFIRAEIYRGLDSESTTPPDIEVLHQHLKNTNDKLNFAYNKYFGSLFKNGSKSTFFSMQVQRYADLYTSDYLNLLNYPLFYHFCANSLPLPHESSSFSSFDTSN.

Low complexity predominate over residues 1-15 (MAENNNNNNNNNNNN). Residues 1–37 (MAENNNNNNNNNNNNVSTPPHQKPHLTTGLRTSSSGL) are disordered. Aspartate 122 functions as the Nucleophile in the catalytic mechanism. Residues aspartate 122 and aspartate 124 each contribute to the IMP site. Aspartate 122 and aspartate 124 together coordinate Mg(2+). The Proton donor role is filled by aspartate 124. ATP is bound at residue asparagine 226. The disordered stretch occupies residues 252 to 273 (LTEEVADEQQQMNSPPLSSLGS). The segment covering 259 to 273 (EQQQMNSPPLSSLGS) has biased composition (polar residues). Residues arginine 299, aspartate 303, lysine 312, threonine 347, asparagine 348, serine 349, and lysine 385 each coordinate IMP. Aspartate 444 contacts Mg(2+). Glutamine 547 and arginine 550 together coordinate ATP.

Belongs to the 5'(3')-deoxyribonucleotidase family. As to quaternary structure, homotetramer. It depends on Mg(2+) as a cofactor.

The protein resides in the cytoplasm. Its subcellular location is the cytosol. The catalysed reaction is a ribonucleoside 5'-phosphate + H2O = a ribonucleoside + phosphate. It carries out the reaction a 2'-deoxyribonucleoside + a ribonucleoside 5'-phosphate = a ribonucleoside + a 2'-deoxyribonucleoside 5'-phosphate. Functionally, broad specificity cytosolic 5'-nucleotidase that catalyzes the dephosphorylation of 6-hydroxypurine nucleoside 5'-monophosphates. In addition, possesses a phosphotransferase activity by which it can transfer a phosphate from a donor nucleoside monophosphate to an acceptor nucleoside. Through these activities regulates the purine nucleoside/nucleotide pools within the cell. The chain is Cytosolic purine 5'-nucleotidase (nt5c2) from Dictyostelium discoideum (Social amoeba).